Reading from the N-terminus, the 369-residue chain is Endo-1,4-beta-xylanase A (369 aa).

The N-terminal stretch at 1–20 (MRKLTQFCLGLMLLPIAAVA) is a signal peptide. Positions 21 to 367 (QNQPTMKDVL…KPVVKEIIKL (347 aa)) constitute a GH10 domain. Glu156 serves as the catalytic Proton donor. The active-site Nucleophile is the Glu261.

Belongs to the glycosyl hydrolase 10 (cellulase F) family.

The enzyme catalyses Endohydrolysis of (1-&gt;4)-beta-D-xylosidic linkages in xylans.. Its pathway is glycan degradation; xylan degradation. The polypeptide is Endo-1,4-beta-xylanase A (xynA) (Xylanibacter ruminicola (Prevotella ruminicola)).